A 313-amino-acid polypeptide reads, in one-letter code: Serine/threonine-protein kinase SZE1 (313 aa).

A lipid anchor (N-myristoyl glycine) is attached at G2. The region spanning 43 to 311 (MELGESLGYI…EVLDNLNAIA (269 aa)) is the Protein kinase domain. Residues 49-57 (LGYINPKTL) and K71 contribute to the ATP site.

Belongs to the protein kinase superfamily. Ser/Thr protein kinase family. In terms of assembly, component of an immune signaling complex made of, at least, SZE1, BKN2/SZE2, ZAR1 and ZED1. Interacts directly with ZED1, ZAR1 and Pseudomonas syringae HOPZ1A at the plasma membrane. In terms of processing, N-terminal myristoylation is critical for plasma membrane localization and implication in defense responses. Post-translationally, autophosphorylated. As to expression, expressed in roots, seedlings, rosette leaves, floral organs, siliques and inflorescence stems.

It localises to the cell membrane. It catalyses the reaction L-seryl-[protein] + ATP = O-phospho-L-seryl-[protein] + ADP + H(+). It carries out the reaction L-threonyl-[protein] + ATP = O-phospho-L-threonyl-[protein] + ADP + H(+). In terms of biological role, together with BKN2/SZE2 and ZED1, required for effector-triggered immunity (e.g. Pseudomonas syringae effector type III HopZ1a) via the activation of ZAR1, thus being essential for resistance against P.syringae pv. tomato DC3000 expressing HopZ1a. This chain is Serine/threonine-protein kinase SZE1, found in Arabidopsis thaliana (Mouse-ear cress).